Consider the following 1375-residue polypeptide: Protein lingerer (1375 aa).

The segment at 1–69 (MSTQTRSGGG…KAQPKATTEQ (69 aa)) is disordered. The segment covering 53–62 (SKTDKPEKAQ) has biased composition (basic and acidic residues). A UBA domain is found at 84 to 124 (QINEKVLLLLTMTQRSEEEVCCALNECDYDLEAAANFLIEE). Low complexity-rich tracts occupy residues 142–161 (ANNTADGAAGDGDWADGNGN) and 173–184 (SNRGGTRGSSDS). The tract at residues 142–286 (ANNTADGAAG…GSGRGGNANE (145 aa)) is disordered. A compositionally biased stretch (basic and acidic residues) spans 185 to 204 (RGWRGRETRENERNQRESRE). A compositionally biased stretch (gly residues) spans 228–282 (RNGGGRSGPGGGGRGGGFVSRSGRGGGRMGGRTGGPRGDRGSGGPGGAYGSGRGG). Tyrosine 321 is subject to Phosphotyrosine. Phosphoserine is present on serine 324. Polar residues-rich tracts occupy residues 374-387 (VQQGSHLEESSSSG) and 395-412 (ATLSGSATTPLLQYSAAV). 2 disordered regions span residues 374 to 453 (VQQG…ASPD) and 613 to 646 (FEPLPEKVGSGFSIDGQQQQQQPDDYQSKSQQQQ). Residues 426 to 441 (SGAGTGASAAAGGGAG) are compositionally biased toward gly residues. Composition is skewed to low complexity over residues 442–453 (STPSSFVSASPD) and 629–646 (QQQQQQPDDYQSKSQQQQ). Serine 672 carries the phosphoserine modification. Phosphothreonine is present on threonine 673. Serine 674 bears the Phosphoserine mark. Over residues 750–767 (QGYGSYQPSSYQQQAGSG) the composition is skewed to low complexity. Disordered stretches follow at residues 750 to 801 (QGYG…SGNA), 869 to 894 (SVSTSSGVSSNSGSTGNGGVVSGQTG), 987 to 1036 (KNTS…GGSG), 1203 to 1234 (SKGGYSSSVNQQSKTQTVSNQSQAGTGSDLTS), and 1251 to 1277 (EKQSFHSGTPPPFNMPNTQTAGGTSAQ). Gly residues predominate over residues 768-781 (AQSGTGAVSGGGGT). Composition is skewed to low complexity over residues 789–801 (GGSSSQNSTSGNA), 869–882 (SVSTSSGVSSNSGS), and 987–1008 (KNTSSSNSSGSGGSAATTTGNA). Residues 1009-1036 (SGQGAGASTGGVGSSSGAGGAGSGGGSG) show a composition bias toward gly residues. Residues 1265-1277 (MPNTQTAGGTSAQ) are compositionally biased toward polar residues.

At stage 11, expression is restricted to the neuroblasts, predominant in the central nervous system (CNS), including the brain and ventral nerve cord, and in the PNS. Later embryonic expression is seen in the gonads. Late third instar larvae show expression in the CNS, imaginal disks (including genital, eye-antennal, leg, wing and haltere disks), and gonads. In the larval brain, it is expressed in all of the glial cells and in clusters of neurons that projected contralaterally. In the larval ventral ganglion, it is expressed in subperineurial glia, peripheral exit glia, and a number of interneurons, but not in motor neurons. Isoform B is abundantly expressed in males and females. Isoform D is male specific and expressed at low levels.

The protein resides in the cytoplasm. Functionally, acts in the nervous system to mediate the control of copulatory organs during courtship. This chain is Protein lingerer, found in Drosophila melanogaster (Fruit fly).